The primary structure comprises 953 residues: Zinc finger protein 507 (953 aa).

Ser-95 carries the post-translational modification Phosphoserine. 3 C2H2-type zinc fingers span residues 125–147 (YQCS…IKQH), 155–185 (LMCS…ANIH), and 248–270 (YRCL…AWKH). Ser-427 bears the Phosphoserine mark. The tract at residues 470 to 489 (KGLATDENAPPGRRRTNSES) is disordered. 5 C2H2-type zinc fingers span residues 641 to 663 (YRCR…LRVH), 669 to 691 (YQCP…MIHH), 697 to 720 (YQCK…REQH), 758 to 780 (YRCD…RRIH), and 786 to 808 (YRCS…MWKH). The interval 831-891 (GRVLGKTPGK…KLSPTSNTSY (61 aa)) is disordered. Polar residues predominate over residues 854-891 (TGSSENAVSSSELMSQTPSEVLGTNENEKLSPTSNTSY). A C2H2-type 9 zinc finger spans residues 911–933 (FCCCICGFESTSKENLLDHMKEH).

Belongs to the krueppel C2H2-type zinc-finger protein family.

The protein localises to the nucleus. In terms of biological role, may be involved in transcriptional regulation. This is Zinc finger protein 507 (ZNF507) from Pongo abelii (Sumatran orangutan).